The chain runs to 389 residues: Acetylornithine aminotransferase (389 aa).

Residues 104-105 and Phe-131 each bind pyridoxal 5'-phosphate; that span reads GT. Arg-134 provides a ligand contact to N(2)-acetyl-L-ornithine. 216 to 219 lines the pyridoxal 5'-phosphate pocket; it reads DEVQ. The residue at position 245 (Lys-245) is an N6-(pyridoxal phosphate)lysine. Ser-273 serves as a coordination point for N(2)-acetyl-L-ornithine. Thr-274 is a pyridoxal 5'-phosphate binding site.

This sequence belongs to the class-III pyridoxal-phosphate-dependent aminotransferase family. ArgD subfamily. In terms of assembly, homodimer. Pyridoxal 5'-phosphate serves as cofactor.

The protein resides in the cytoplasm. The catalysed reaction is N(2)-acetyl-L-ornithine + 2-oxoglutarate = N-acetyl-L-glutamate 5-semialdehyde + L-glutamate. The protein operates within amino-acid biosynthesis; L-arginine biosynthesis; N(2)-acetyl-L-ornithine from L-glutamate: step 4/4. The chain is Acetylornithine aminotransferase from Methanopyrus kandleri (strain AV19 / DSM 6324 / JCM 9639 / NBRC 100938).